A 489-amino-acid polypeptide reads, in one-letter code: Acetylcholine receptor subunit beta (489 aa).

A signal peptide spans 1 to 20 (NSGALLWPLIWGLLLIGTQA). Residues 21 to 235 (LDKEAQLRDK…ITFYLVIQRK (215 aa)) lie on the Extracellular side of the membrane. Residues asparagine 135 and asparagine 161 are each glycosylated (N-linked (GlcNAc...) asparagine). Cysteine 148 and cysteine 162 are joined by a disulfide. The next 3 membrane-spanning stretches (helical) occupy residues 236–260 (PLFY…VFYL), 268–286 (MTLS…LLLA), and 302–323 (YLIF…VLNL). At 324 to 457 (HHRSPNTHHM…WQYVAMVVDR (134 aa)) the chain is on the cytoplasmic side. The chain crosses the membrane as a helical span at residues 458–476 (LFLWTFIAFTSLGTLSIFL).

Belongs to the ligand-gated ion channel (TC 1.A.9) family. Acetylcholine receptor (TC 1.A.9.1) subfamily. Beta-1/CHRNB1 sub-subfamily. As to quaternary structure, pentamer of two alpha chains, and one each of the beta, delta, and gamma (in immature muscle) or epsilon (in mature muscle) chains.

The protein localises to the postsynaptic cell membrane. The protein resides in the cell membrane. It carries out the reaction K(+)(in) = K(+)(out). The catalysed reaction is Na(+)(in) = Na(+)(out). After binding acetylcholine, the AChR responds by an extensive change in conformation that affects all subunits and leads to opening of an ion-conducting channel across the plasma membrane. This Xenopus laevis (African clawed frog) protein is Acetylcholine receptor subunit beta (chrnb1).